Here is a 151-residue protein sequence, read N- to C-terminus: Alpha-latroinsectotoxin-Lh1a (151 aa).

8 ANK repeats span residues 21–37 (TDVTQTLIDITEIDLNA), 41–52 (ILIRNTNAVINI), 56–80 (VGLTPLHLATLQNNLSVSKGAYLND), 84–104 (NGMTPLHYAAMTGNLEMVDFL), 105–116 (KWTPLHLAILFK), 117–125 (QLVIELLAK), 126–146 (TFFDLAIENGRLNIVAFAVEK), and 147–151 (YIAAR).

This sequence belongs to the cationic peptide 01 (latrotoxin) family. 02 (alpha-latroinsectotoxin) subfamily. As to quaternary structure, homotetramer in membranes. In terms of tissue distribution, expressed by the venom gland.

The protein localises to the secreted. Its subcellular location is the target cell membrane. Insecticidal presynaptic neurotoxin that induces massive neurotransmitter release at insect (but not vertebrate) neuromuscular junctions. Native toxin forms cation-permeable pores (with high permeability to calcium) in lipid membranes locust muscle membrane and artificial lipid bilayers. May bind to insect neurexin-1 homolog, insect adhesion G protein-coupled receptor L1 homolog, and insect receptor-type tyrosine-protein phosphatase S homolog, and induces neurotransmitter exocytosis both by forming tetrameric pores in membranes and signaling via G protein-coupled receptor. Oligomerization is a process independent of divalent cations. The toxin forms channels with 0.55-0.58 nm entrance diameter and a relatively small conductance in planar phospholipid membranes. This is Alpha-latroinsectotoxin-Lh1a from Latrodectus hasselti (Redback spider).